The following is a 584-amino-acid chain: Proline--tRNA ligase (584 aa).

The protein belongs to the class-II aminoacyl-tRNA synthetase family. ProS type 1 subfamily. In terms of assembly, homodimer.

It is found in the cytoplasm. It carries out the reaction tRNA(Pro) + L-proline + ATP = L-prolyl-tRNA(Pro) + AMP + diphosphate. In terms of biological role, catalyzes the attachment of proline to tRNA(Pro) in a two-step reaction: proline is first activated by ATP to form Pro-AMP and then transferred to the acceptor end of tRNA(Pro). As ProRS can inadvertently accommodate and process non-cognate amino acids such as alanine and cysteine, to avoid such errors it has two additional distinct editing activities against alanine. One activity is designated as 'pretransfer' editing and involves the tRNA(Pro)-independent hydrolysis of activated Ala-AMP. The other activity is designated 'posttransfer' editing and involves deacylation of mischarged Ala-tRNA(Pro). The misacylated Cys-tRNA(Pro) is not edited by ProRS. This chain is Proline--tRNA ligase, found in Mycobacterium sp. (strain KMS).